The primary structure comprises 251 residues: Triosephosphate isomerase (251 aa).

Substrate is bound at residue Asn-9 to Lys-11. His-95 acts as the Electrophile in catalysis. Glu-167 serves as the catalytic Proton acceptor. Residues Gly-173, Ser-212, and Gly-233–Gly-234 contribute to the substrate site.

The protein belongs to the triosephosphate isomerase family. In terms of assembly, homodimer.

It localises to the cytoplasm. The catalysed reaction is D-glyceraldehyde 3-phosphate = dihydroxyacetone phosphate. Its pathway is carbohydrate biosynthesis; gluconeogenesis. It functions in the pathway carbohydrate degradation; glycolysis; D-glyceraldehyde 3-phosphate from glycerone phosphate: step 1/1. Functionally, involved in the gluconeogenesis. Catalyzes stereospecifically the conversion of dihydroxyacetone phosphate (DHAP) to D-glyceraldehyde-3-phosphate (G3P). The protein is Triosephosphate isomerase of Pseudomonas savastanoi pv. phaseolicola (strain 1448A / Race 6) (Pseudomonas syringae pv. phaseolicola (strain 1448A / Race 6)).